A 267-amino-acid chain; its full sequence is MKLLAILLVLPALCFGQRHEGPGMGPGMGPGMGPGMGPGMGPGMGPGMGPGMGPGQGQGQGQGQGQVGGSKCKGGWFLIGQQCFKMMSRALKWNDAELMCEQNAPCGTPVLGGVMTIPDIQTSNAVINHLKSLSSTAMAIDIPFWTGLHNKWNALLERYEGWKWPAGWSTTQQPLRFVNWAPREPNNQLLDQQHSYCARMNRMGQWYVVRCDEPMYFACSMPVSPPLVGGANTNPGMGMLVENPAPIINGYTEFESGLLMRNGVGGP.

An N-terminal signal peptide occupies residues 1–16 (MKLLAILLVLPALCFG). The segment at 20-64 (EGPGMGPGMGPGMGPGMGPGMGPGMGPGMGPGMGPGQGQGQGQGQ) is 11 X 4 AA tandem repeats of G-[PQ]-G-[MQ]. Tandem repeats lie at residues 21–24 (GPGM), 25–28 (GPGM), 29–32 (GPGM), 33–36 (GPGM), 37–40 (GPGM), 41–44 (GPGM), 45–48 (GPGM), 49–52 (GPGM), 53–56 (GPGQ), 57–60 (GQGQ), and 61–64 (GQGQ). Residues 44–68 (MGPGMGPGMGPGQGQGQGQGQGQVG) form a disordered region. A C-type lectin domain is found at 79–220 (IGQQCFKMMS…CDEPMYFACS (142 aa)). Intrachain disulfides connect Cys-100/Cys-219 and Cys-197/Cys-211.

In terms of tissue distribution, expressed specifically in the micromere/primary mesenchyme cells (PMC) lineage. Produced uniformly and exclusively by PMCs through the early prism stage and this specificity is further restricted during skeletogenesis to a subpopulation of PMCs associated with the growing tips of the spicules.

Its subcellular location is the secreted. May play a role in the regulation or execution of skeletal growth. The polypeptide is 27 kDa primary mesenchyme-specific spicule protein (PM27) (Strongylocentrotus purpuratus (Purple sea urchin)).